Reading from the N-terminus, the 317-residue chain is UV DNA damage endonuclease (317 aa).

Belongs to the uve1/UvsE family.

Component in a DNA repair pathway. Removal of UV LIGHT damaged nucleotides. Recognizes pyrimidine dimers and cleave a phosphodiester bond immediately 5' to the lesion. This is UV DNA damage endonuclease from Bacillus cereus (strain G9842).